A 495-amino-acid chain; its full sequence is tRNA(Ile)-lysidine synthase (495 aa).

26 to 31 (SGGSDS) serves as a coordination point for ATP.

The protein belongs to the tRNA(Ile)-lysidine synthase family.

The protein localises to the cytoplasm. The enzyme catalyses cytidine(34) in tRNA(Ile2) + L-lysine + ATP = lysidine(34) in tRNA(Ile2) + AMP + diphosphate + H(+). In terms of biological role, ligates lysine onto the cytidine present at position 34 of the AUA codon-specific tRNA(Ile) that contains the anticodon CAU, in an ATP-dependent manner. Cytidine is converted to lysidine, thus changing the amino acid specificity of the tRNA from methionine to isoleucine. This chain is tRNA(Ile)-lysidine synthase, found in Bartonella tribocorum (strain CIP 105476 / IBS 506).